The chain runs to 501 residues: 2,3-bisphosphoglycerate-independent phosphoglycerate mutase (501 aa).

Residues aspartate 10 and serine 60 each coordinate Mn(2+). The Phosphoserine intermediate role is filled by serine 60. Substrate contacts are provided by residues histidine 121, 151–152, arginine 182, arginine 188, 256–259, and lysine 329; these read RD and RPDR. Mn(2+) is bound by residues aspartate 394, histidine 398, aspartate 435, histidine 436, and histidine 453.

This sequence belongs to the BPG-independent phosphoglycerate mutase family. In terms of assembly, monomer. Requires Mn(2+) as cofactor.

It carries out the reaction (2R)-2-phosphoglycerate = (2R)-3-phosphoglycerate. It functions in the pathway carbohydrate degradation; glycolysis; pyruvate from D-glyceraldehyde 3-phosphate: step 3/5. In terms of biological role, catalyzes the interconversion of 2-phosphoglycerate and 3-phosphoglycerate. The polypeptide is 2,3-bisphosphoglycerate-independent phosphoglycerate mutase (Mycoplasmopsis synoviae (strain 53) (Mycoplasma synoviae)).